We begin with the raw amino-acid sequence, 187 residues long: Meiotically up-regulated protein C1442.13c (187 aa).

Disordered stretches follow at residues 15-46 (QWEN…LSNE) and 119-145 (IQEG…PAIN). Over residues 26–41 (PPRKPKIVQPKKKPSK) the composition is skewed to basic residues. The region spanning 145–187 (NNGKGKQLLEMMGWSRGKGLGSENQGMVDPVVAVVKNNKQGLH) is the G-patch domain.

Its subcellular location is the nucleus. It is found in the cytoplasm. The protein resides in the cytoskeleton. The protein localises to the microtubule organizing center. It localises to the spindle pole body. Functionally, has a role in meiosis and sporulation. Required for meiotic chromosome segregation. This Schizosaccharomyces pombe (strain 972 / ATCC 24843) (Fission yeast) protein is Meiotically up-regulated protein C1442.13c.